A 402-amino-acid chain; its full sequence is S-adenosylmethionine synthase (402 aa).

His-16 is a binding site for ATP. Asp-18 contacts Mg(2+). Glu-44 contributes to the K(+) binding site. Residues Glu-57 and Gln-103 each coordinate L-methionine. The interval 103 to 113 (QSPDIAQGVDT) is flexible loop. ATP contacts are provided by residues 178-180 (DGK), 249-250 (KF), Asp-258, 264-265 (RK), Ala-281, and Lys-285. Asp-258 contacts L-methionine. Lys-289 serves as a coordination point for L-methionine.

It belongs to the AdoMet synthase family. As to quaternary structure, homotetramer; dimer of dimers. Mg(2+) serves as cofactor. Requires K(+) as cofactor.

The protein localises to the cytoplasm. It carries out the reaction L-methionine + ATP + H2O = S-adenosyl-L-methionine + phosphate + diphosphate. Its pathway is amino-acid biosynthesis; S-adenosyl-L-methionine biosynthesis; S-adenosyl-L-methionine from L-methionine: step 1/1. Its function is as follows. Catalyzes the formation of S-adenosylmethionine (AdoMet) from methionine and ATP. The overall synthetic reaction is composed of two sequential steps, AdoMet formation and the subsequent tripolyphosphate hydrolysis which occurs prior to release of AdoMet from the enzyme. The chain is S-adenosylmethionine synthase from Mycolicibacterium vanbaalenii (strain DSM 7251 / JCM 13017 / BCRC 16820 / KCTC 9966 / NRRL B-24157 / PYR-1) (Mycobacterium vanbaalenii).